Consider the following 822-residue polypeptide: MAAPRRRMGLEKIGLYDVGRAIGKGNFATVRIARHKIAKTKVAIKSIDVSALDRENLIKLEREVKIVKVIDHPHIVKSYEIMRVDNMLYIVSEYCSSGELYETLIEKGRVAENVARKWFSETASAVAYLHSQGIVHRDLKAENILLGKNSNIKIIDFGFSNFQTGDQLLNTWCGSPPYAAPELLLGNSYDGMKADIWSMGVLLYILVAGGFPFPSDSVNKLKRSVLSGLVKIPYWVSVECADFIRKMLVLNPGKRYTIQNVLQHRWMHIRDDVQKNQAAQLLEAIPSSSIEIRQQSTKLNPTIMMFMQQHGKWSEEQIIDAVLGRDFESPIFATYELLADKVKKGTLEGTGEEFPRRGSRGSILSGKANVDEQPLTPTISAHQLAQLNLSSPDCDSDDSSNSDLCDDSPMSSMGPMNHERQFGTPHGLDIIGNRFENRRHTLCASEQLLSPNMMGQFPPPNLLLNNFSMNPPLGFPPMPEGQAAEFPLPSLHPAFATIPIADLSKMLPVPKSERRASAGETLLPTNFDLTQHLANLPAPPISFPTVEEEGKSYLSKYGGKRNTVHCLGNQLGGGIQNPIPRYQRTPYTKAPPAERRSSWASPSLSAQQQNHLEKLFKQALQTNNDMTRLHKEFKGLSHGCAQSQITNEGSSLACPQISITDEYNRQHNIAPSASSFDPVSIFQKNAQEVVFGQRPATAIGFSSTSFSGMSTPEQTTRSIDDRVRSIVCTLPFTEVIDELKASLNILKIPFSESHEMVYEPQVTEMRRLSLPSGVEIGVAVLPPEHKAHVEFAIINNDSPTSEYLCDQLICRLRMIDPSWSSE.

In terms of domain architecture, Protein kinase spans 16 to 267; it reads YDVGRAIGKG…IQNVLQHRWM (252 aa). Residues 22–30 and K45 each bind ATP; that span reads IGKGNFATV. D138 functions as the Proton acceptor in the catalytic mechanism. 3 disordered regions span residues 348–367, 389–423, and 577–602; these read EGTG…LSGK, LSSP…RQFG, and NPIP…WASP. Acidic residues predominate over residues 394-406; the sequence is CDSDDSSNSDLCD.

It belongs to the protein kinase superfamily. CAMK Ser/Thr protein kinase family. SNF1 subfamily. Interacts with tax-6. Requires Mg(2+) as cofactor. Post-translationally, autophosphorylated. Elevated cAMP levels appears to act via PKA to directly or indirectly phosphorylate multiple sites on kin-29 and inhibit function. Primarily neuronal, with additional expression in body wall muscle and hypodermal cells. Among neuronal cells, expressed in multiple sensory neurons and interneurons in the lateral, anterior, and lumbar ganglia, as well as in motor neurons in the ventral motor cord. Present in the AWB and AWC olfactory neurons.

Its subcellular location is the cytoplasm. The protein resides in the nucleus. It catalyses the reaction L-seryl-[protein] + ATP = O-phospho-L-seryl-[protein] + ADP + H(+). The catalysed reaction is L-threonyl-[protein] + ATP = O-phospho-L-threonyl-[protein] + ADP + H(+). Functionally, regulates chemoreceptor expression by phosphorylating the hda-4 class II histone deacetylase (HDAC) and inhibiting the gene repression functions of hda-4 and the mef-2 transcription factor, enabling the correct sensing and transduction of food signals. Role in determining body size, the dauer decision and serotonin-mediated egg laying. May modulate the Sma/Mab pathway and regulates development in the later larval stages. This is Serine/threonine-protein kinase kin-29 from Caenorhabditis elegans.